The following is a 318-amino-acid chain: Putative HTH-type transcriptional regulatory protein TK0539 (318 aa).

An HTH cro/C1-type domain is found at 131–189 (LRELREKHGYSVNELAQLLGVSRKSLLNYERGEQAVSLDVAIQLEEIFDEALAEPIDIL). A DNA-binding region (H-T-H motif) is located at residues 142-161 (VNELAQLLGVSRKSLLNYER).

In Thermococcus kodakarensis (strain ATCC BAA-918 / JCM 12380 / KOD1) (Pyrococcus kodakaraensis (strain KOD1)), this protein is Putative HTH-type transcriptional regulatory protein TK0539.